The following is a 430-amino-acid chain: Glutamate-1-semialdehyde 2,1-aminomutase (430 aa).

K269 is subject to N6-(pyridoxal phosphate)lysine.

This sequence belongs to the class-III pyridoxal-phosphate-dependent aminotransferase family. HemL subfamily. In terms of assembly, homodimer. Pyridoxal 5'-phosphate is required as a cofactor.

The protein localises to the cytoplasm. The catalysed reaction is (S)-4-amino-5-oxopentanoate = 5-aminolevulinate. Its pathway is porphyrin-containing compound metabolism; protoporphyrin-IX biosynthesis; 5-aminolevulinate from L-glutamyl-tRNA(Glu): step 2/2. This Desulfitobacterium hafniense (strain DSM 10664 / DCB-2) protein is Glutamate-1-semialdehyde 2,1-aminomutase.